The following is a 323-amino-acid chain: Probable cell division protein WhiA (323 aa).

The H-T-H motif DNA-binding region spans 275-309 (TLKELGEMLTTGQVSKSGINHRLRKLDQIAERLRS).

It belongs to the WhiA family.

Its function is as follows. Involved in cell division and chromosome segregation. The protein is Probable cell division protein WhiA of Listeria monocytogenes serotype 4b (strain CLIP80459).